Consider the following 154-residue polypeptide: UPF0547 protein C16orf87 homolog (154 aa).

A disordered region spans residues 46-119 (HPEKAPSSTE…KHEEEREKQE (74 aa)). Basic and acidic residues predominate over residues 68–84 (VRREKINSTVNKDLENR). Ser91 carries the post-translational modification Phosphoserine. Residues 104-132 (KSASAKKHEEEREKQEKEIDIYANLSDEK) are a coiled coil. The span at 109–119 (KKHEEEREKQE) shows a compositional bias: basic and acidic residues.

Belongs to the UPF0547 family.

This Bos taurus (Bovine) protein is UPF0547 protein C16orf87 homolog.